Consider the following 429-residue polypeptide: Glutamate-1-semialdehyde 2,1-aminomutase 2 (429 aa).

Lys268 carries the post-translational modification N6-(pyridoxal phosphate)lysine.

Belongs to the class-III pyridoxal-phosphate-dependent aminotransferase family. HemL subfamily. Homodimer. It depends on pyridoxal 5'-phosphate as a cofactor.

Its subcellular location is the cytoplasm. The catalysed reaction is (S)-4-amino-5-oxopentanoate = 5-aminolevulinate. Its pathway is porphyrin-containing compound metabolism; protoporphyrin-IX biosynthesis; 5-aminolevulinate from L-glutamyl-tRNA(Glu): step 2/2. This is Glutamate-1-semialdehyde 2,1-aminomutase 2 from Staphylococcus aureus (strain MSSA476).